Reading from the N-terminus, the 388-residue chain is Chorismate synthase (388 aa).

Positions 39 and 45 each coordinate NADP(+). Residues Arg-130 to Ser-132, Asn-251 to Ala-252, Gly-296, Lys-311 to Thr-315, and Arg-337 contribute to the FMN site.

It belongs to the chorismate synthase family. As to quaternary structure, homotetramer. FMNH2 is required as a cofactor.

It carries out the reaction 5-O-(1-carboxyvinyl)-3-phosphoshikimate = chorismate + phosphate. It participates in metabolic intermediate biosynthesis; chorismate biosynthesis; chorismate from D-erythrose 4-phosphate and phosphoenolpyruvate: step 7/7. Its function is as follows. Catalyzes the anti-1,4-elimination of the C-3 phosphate and the C-6 proR hydrogen from 5-enolpyruvylshikimate-3-phosphate (EPSP) to yield chorismate, which is the branch point compound that serves as the starting substrate for the three terminal pathways of aromatic amino acid biosynthesis. This reaction introduces a second double bond into the aromatic ring system. The sequence is that of Chorismate synthase from Streptococcus thermophilus (strain CNRZ 1066).